Reading from the N-terminus, the 270-residue chain is Glutamate racemase (270 aa).

Substrate-binding positions include 14–15 (DS) and 46–47 (YG). Residue cysteine 77 is the Proton donor/acceptor of the active site. Residue 78–79 (NT) coordinates substrate. Cysteine 189 functions as the Proton donor/acceptor in the catalytic mechanism. Position 190-191 (190-191 (TH)) interacts with substrate.

This sequence belongs to the aspartate/glutamate racemases family.

It carries out the reaction L-glutamate = D-glutamate. It functions in the pathway cell wall biogenesis; peptidoglycan biosynthesis. In terms of biological role, provides the (R)-glutamate required for cell wall biosynthesis. The protein is Glutamate racemase of Neisseria gonorrhoeae (strain ATCC 700825 / FA 1090).